Here is an 84-residue protein sequence, read N- to C-terminus: MARRCEICNKGVVAGVQYSHSHRQSKRTWAPNIKKVKAIVKGTPKTVHVCTRCLRSEKFKELYKKSLAKMQFNNCIFILHKNKG.

This sequence belongs to the bacterial ribosomal protein bL28 family.

In Clostridium perfringens (strain 13 / Type A), this protein is Large ribosomal subunit protein bL28.